Here is a 138-residue protein sequence, read N- to C-terminus: Rapid alkalinization factor 23 (138 aa).

A signal peptide spans Met-1–Ala-28. A propeptide spans Val-29–Leu-88 (removed in mature form). 2 disulfide bridges follow: Cys-106/Cys-116 and Cys-129/Cys-135.

It belongs to the plant rapid alkalinization factor (RALF) family. Proteolytically cleaved, probably by SBT6.1 (S1P), a subtilisin-like serine protease (subtilase).

It localises to the secreted. Functionally, cell signaling peptide that may regulate plant stress, growth, and development. Mediates a rapid alkalinization of extracellular space by mediating a transient increase in the cytoplasmic Ca(2+) concentration leading to a calcium-dependent signaling events through a cell surface receptor and a concomitant activation of some intracellular mitogen-activated protein kinases. Negatively regulates brassinolide (BL)-mediated signaling pathway (e.g. BL-induced hypocotyl elongation and branching limitation). This chain is Rapid alkalinization factor 23 (RALF23), found in Arabidopsis thaliana (Mouse-ear cress).